Reading from the N-terminus, the 101-residue chain is NADH-quinone oxidoreductase subunit K (101 aa).

3 helical membrane-spanning segments follow: residues 4-24 (LEHY…GIFL), 30-50 (IVIL…LVAF), and 65-85 (FVLT…VTFF).

The protein belongs to the complex I subunit 4L family. NDH-1 is composed of 14 different subunits. Subunits NuoA, H, J, K, L, M, N constitute the membrane sector of the complex.

Its subcellular location is the cell inner membrane. The catalysed reaction is a quinone + NADH + 5 H(+)(in) = a quinol + NAD(+) + 4 H(+)(out). NDH-1 shuttles electrons from NADH, via FMN and iron-sulfur (Fe-S) centers, to quinones in the respiratory chain. The immediate electron acceptor for the enzyme in this species is believed to be ubiquinone. Couples the redox reaction to proton translocation (for every two electrons transferred, four hydrogen ions are translocated across the cytoplasmic membrane), and thus conserves the redox energy in a proton gradient. The sequence is that of NADH-quinone oxidoreductase subunit K from Cereibacter sphaeroides (strain ATCC 17029 / ATH 2.4.9) (Rhodobacter sphaeroides).